The chain runs to 354 residues: MEITAQMVKELRESTGAGMMDCKKALSEADGDMQKAVDILREKGLGQAAKKADRLASEGLVSVEVCEHCKRATISEINSETDFVARNPQFQALTKDTTAHIQAKGITSVEELNESTLNGVKFEEYFKTQIATIGENLVVRRFETISADEKGVVNGYVHSNGRVGVLIGAACQSEEVAQKAAEFIRNLCMHAAAMKPTVISYKDLEKDFVEKEFIALKAELEKENEELKRLGKPLHHIPRFASRSQITPEILAGVENEIKEELKAEGKPEKIWDKIIPGKIERFYADNTILDQRLTLLGQFYVMDDKKTIEQVLAEKSKELGGKIEIVKYVRFELGEGLEKKVDDFAAEVAAQIG.

The tract at residues Thr-81–Val-84 is involved in Mg(2+) ion dislocation from EF-Tu.

It belongs to the EF-Ts family.

The protein resides in the cytoplasm. Its function is as follows. Associates with the EF-Tu.GDP complex and induces the exchange of GDP to GTP. It remains bound to the aminoacyl-tRNA.EF-Tu.GTP complex up to the GTP hydrolysis stage on the ribosome. In Campylobacter curvus (strain 525.92), this protein is Elongation factor Ts.